The sequence spans 600 residues: MDTKLTPPWLRQENNLLNPEVTQRLFINQDNIPNLPTEAPQVYLARFLEWVEPLVSKVKFVKAQAAVQDYLNSKACAQIETIIAERAQNTHSSWLANWWVQYAYLTSTGPVSPEVNAPYYLELPTVGWSQAELAAALSAQLWHIYQQVQKRQLTSFSVKDKLFSLDTLQSIFASCQIHRADGDVYFVNDQPANFIVVIKNNVFYKLVIDNSGSLEQLQAQLQLSFVQILDNELSHPPHWNLLTATTTKAESQSLLDQLWAQNPEMLLDIYNSAFIVNLDNVELTTPLQLLRNSTWTPNFNRWHAKGIQLVITKNAQLVILADHTSFDGSSVATLANIFVSKLQKVNTEGASALTPTMLSFPTVDQDKQKYFKQLSKNFKDYVYNAVMFELKWDWFTKPLIKAKGIKNSEAFIHLCYQIAQYQTNKKLQNTYVAVDMRQYFRGRTECLRPLSKQSVAFVKRYCKDPKGTLKQFRKYYPAIESLHFEKTRLAQKGSGVNRHLLGAYLAWNEHQDTIAKPALFETKAWKTIAANPLSTSSIVDKYLRNFSFDPVEPNGIGIAYAIDDTNFRAILSVYQHNLQYLKDWMKHFEQTVKTILKTLK.

Residue H323 is the Proton acceptor of the active site. CoA is bound at residue 396–409 (TKPLIKAKGIKNSE).

It belongs to the carnitine/choline acetyltransferase family.

This is Putative acetyltransferase MPN_114 from Mycoplasma pneumoniae (strain ATCC 29342 / M129 / Subtype 1) (Mycoplasmoides pneumoniae).